Here is a 161-residue protein sequence, read N- to C-terminus: Peripheral myelin protein 22 (161 aa).

Residue methionine 1 is a topological domain, cytoplasmic. Residues 2 to 31 (LLLLLGILFLHIAVLVLLFVSTIVSQWLVG) form a helical membrane-spanning segment. At 32–64 (NGHTTDLWQNCTTSALGAVQHCYSSSVSEWLQS) the chain is on the extracellular side. A glycan (N-linked (GlcNAc...) asparagine) is linked at asparagine 41. A helical membrane pass occupies residues 65 to 91 (VQATMILSVIFSVLALFLFFCQLFTLT). The Cytoplasmic portion of the chain corresponds to 92 to 95 (KGGR). A helical membrane pass occupies residues 96–119 (FYITGFFQILAGLCVMSAAAIYTV). Residues 120-133 (RHSEWHVNTDYSYG) lie on the Extracellular side of the membrane. The chain crosses the membrane as a helical span at residues 134-156 (FAYILAWVAFPLALLSGIIYVIL). The Cytoplasmic segment spans residues 157–160 (RKRE).

This sequence belongs to the PMP-22/EMP/MP20 family. Ubiquitinated by the DCX(DCAF13) E3 ubiquitin ligase complex, leading to its degradation. As to expression, schwann cells of the peripheral nervous system. Expressed at growth arrest of mammalian fibroblasts.

It localises to the cell membrane. In terms of biological role, might be involved in growth regulation, and in myelinization in the peripheral nervous system. This Mus musculus (Mouse) protein is Peripheral myelin protein 22 (Pmp22).